A 1055-amino-acid chain; its full sequence is DIS3-like exonuclease 2 (1055 aa).

Disordered regions lie at residues 1–109 and 229–249; these read MKSA…SSPE and SAAK…KARQ. Over residues 17 to 32 the composition is skewed to basic residues; the sequence is HKKKRNRPQKQNRRSK. Over residues 39 to 59 the composition is skewed to basic and acidic residues; that stretch reads EDAHVEESLDGRDSSRSKAKD. Low complexity predominate over residues 97–108; the sequence is PRRSASPLLSSP. Asp-488 and Asp-497 together coordinate Mg(2+).

The protein belongs to the RNR ribonuclease family. DIS3L2 subfamily. Requires Mg(2+) as cofactor. The cofactor is Mn(2+). As to expression, widely expressed.

It is found in the cytoplasm. It localises to the P-body. 3'-5'-exoribonuclease that specifically recognizes RNAs polyuridylated at their 3' end and mediates their degradation. Component of an exosome-independent RNA degradation pathway that mediates degradation of cytoplasmic mRNAs that have been deadenylated and subsequently uridylated at their 3'. The polypeptide is DIS3-like exonuclease 2 (SOV) (Arabidopsis thaliana (Mouse-ear cress)).